We begin with the raw amino-acid sequence, 119 residues long: Protein Wnt-4 (119 aa).

Ser-1 carries O-palmitoleoyl serine; by PORCN lipidation. 2 cysteine pairs are disulfide-bonded: Cys-69/Cys-100 and Cys-85/Cys-95. Asn-86 carries an N-linked (GlcNAc...) asparagine glycan.

Belongs to the Wnt family. Palmitoleoylation is required for efficient binding to frizzled receptors. Depalmitoleoylation leads to Wnt signaling pathway inhibition.

It localises to the secreted. Its subcellular location is the extracellular space. The protein localises to the extracellular matrix. Its function is as follows. Ligand for members of the frizzled family of seven transmembrane receptors. Plays an important role in embryonic development. This Plestiodon skiltonianus (Western skink) protein is Protein Wnt-4 (WNT-4).